The chain runs to 373 residues: tRNA-specific 2-thiouridylase MnmA (373 aa).

Residues 12 to 19 and Met-38 contribute to the ATP site; that span reads GMSGGVDS. The segment at 98 to 100 is interaction with target base in tRNA; that stretch reads NPD. Cys-103 acts as the Nucleophile in catalysis. The cysteines at positions 103 and 200 are disulfide-linked. Gly-127 is a binding site for ATP. The interaction with tRNA stretch occupies residues 150–152; the sequence is KDQ. The active-site Cysteine persulfide intermediate is Cys-200. Residues 312–313 are interaction with tRNA; the sequence is RY.

This sequence belongs to the MnmA/TRMU family.

It is found in the cytoplasm. The catalysed reaction is S-sulfanyl-L-cysteinyl-[protein] + uridine(34) in tRNA + AH2 + ATP = 2-thiouridine(34) in tRNA + L-cysteinyl-[protein] + A + AMP + diphosphate + H(+). In terms of biological role, catalyzes the 2-thiolation of uridine at the wobble position (U34) of tRNA, leading to the formation of s(2)U34. This is tRNA-specific 2-thiouridylase MnmA from Streptococcus pyogenes serotype M18 (strain MGAS8232).